Consider the following 157-residue polypeptide: Phosphopantetheine adenylyltransferase (157 aa).

Serine 8 is a substrate binding site. Residues 8–9 (SF) and histidine 16 contribute to the ATP site. Residues lysine 40, leucine 72, and arginine 86 each contribute to the substrate site. ATP-binding positions include 87-89 (GLR), glutamate 97, and 121-127 (FGTISSS).

This sequence belongs to the bacterial CoaD family. In terms of assembly, homohexamer. The cofactor is Mg(2+).

Its subcellular location is the cytoplasm. The enzyme catalyses (R)-4'-phosphopantetheine + ATP + H(+) = 3'-dephospho-CoA + diphosphate. It functions in the pathway cofactor biosynthesis; coenzyme A biosynthesis; CoA from (R)-pantothenate: step 4/5. Reversibly transfers an adenylyl group from ATP to 4'-phosphopantetheine, yielding dephospho-CoA (dPCoA) and pyrophosphate. This chain is Phosphopantetheine adenylyltransferase, found in Cutibacterium acnes (strain DSM 16379 / KPA171202) (Propionibacterium acnes).